Here is a 1013-residue protein sequence, read N- to C-terminus: MVVFLGRHLPALLEVFKKGSAKAESDNRQGAGPSQGPGSVGDELQDNVFFPSGRPPHLEELHTQAQEGLRSLQHQERQKLSKGGWDHGDTQSIQSSQTGPDEDTISIYSQKSYMTESSTAEDALSVRSEMIQRRGSTFRPHDSFPKSGKSGRRRRERRSTVLGLPQHVQKELGLRNNREAPGTPQPPGSRDAVRIPTVDGRPGLALGTGVRVSLQALEAETEAGTDAEAVIQRHIDRVYHDDTLVGRSTGARPPPLTRPMSLAVPGLTGGAGSPEPLSPAMSISPQATYLSKLIPHAVLPPTVDVVALGRSSLRTLSRCSLLSASPASVRSLGRFSSASSPRPRSRNASSSSDNWSHSQSSETIVSDGSTLSSKGGSEGQPEGSVASNNVAPPPPGGSGRGSPSGGSTAETSDTASIRSSGQLSGRSVSLRKMKRPPPPPRRTYSLHQRGSAVPDGPLGLPPKPERKQQPQLPRPPTAGGSSGVGAVSCPPSSAGTWGSGLSPGGSRRPPRSPERTLSPSSGYSSQSGTPTLPPKGLAVAPASPGKAQPPKPDRVTSLRSPGASVSSSLTSLCSSSSDPTPLDRSGPQMSTPLSDRFVIPPHPKVPAPFSPPPSKSKSSNQAAPVLAAPAVAPGQVSTIDTSPASPSMPQTTLTPAQESPVASKDESPPPSPPPSYHPPPPPTKKPEVLEEAPPPPEAAVEILPDPSWPPPPPPAPEEQDLSMADFPPPEEVFFNAGPELGPLESCSSEAAVPPAASLSQTPPPAPPPSSGSEPLARLPQKDSVGKHSGAPREDSGTPLVTPSLLQMVRLRSVGASTGIPNPSPGSSAPQKPLRRALSGRASPVTAPSSGLHAAVRLKASSLAASESPASALPTGIPEAEPRSPQSPASKASFIFSKGTKKLQLERPVSPEAQADLQRNLVAELRSISEHRPPPQAQKKPSKAPPPVARKPSVGVPPPSPSLPRTESLTAPSTNGLPHAEDRTNGELAENGGVQLAATEKMGSPGSDPQKKLV.

Lys-17 is subject to Phosphoserine. The segment at 20 to 195 (SAKAESDNRQ…PPGSRDAVRI (176 aa)) is disordered. The segment covering 73-89 (QHQERQKLSKGGWDHGD) has biased composition (basic and acidic residues). 2 stretches are compositionally biased toward polar residues: residues 90-99 (TQSIQSSQTG) and 106-120 (SIYSQKSYMTESSTA). Phosphoserine is present on Ser-92. At Tyr-108 the chain carries Phosphotyrosine. Phosphoserine occurs at positions 136, 143, and 159. Thr-160 is subject to Phosphothreonine. Over residues 168-178 (VQKELGLRNNR) the composition is skewed to basic and acidic residues. Ser-213 carries the post-translational modification Phosphoserine. Arg-318 is modified (asymmetric dimethylarginine). Residues Ser-320, Ser-325, Ser-328, Ser-336, Ser-337, Ser-339, and Ser-340 each carry the phosphoserine modification. The interval 330 to 1013 (RSLGRFSSAS…PGSDPQKKLV (684 aa)) is disordered. Residues 336–361 (SSASSPRPRSRNASSSSDNWSHSQSS) show a composition bias toward low complexity. Over residues 362-375 (ETIVSDGSTLSSKG) the composition is skewed to polar residues. Phosphoserine is present on residues Ser-398, Ser-402, and Ser-407. Polar residues predominate over residues 408 to 427 (TAETSDTASIRSSGQLSGRS). Low complexity-rich tracts occupy residues 484–493 (VGAVSCPPSS) and 515–530 (RTLSPSSGYSSQSGTP). A Phosphothreonine modification is found at Thr-529. Ser-543 bears the Phosphoserine mark. The span at 564 to 577 (SVSSSLTSLCSSSS) shows a compositional bias: low complexity. Thr-591 carries the post-translational modification Phosphothreonine. Residues 600–614 (PPHPKVPAPFSPPPS) show a composition bias toward pro residues. Phosphoserine is present on Ser-610. Residues 615 to 633 (KSKSSNQAAPVLAAPAVAP) show a composition bias toward low complexity. Polar residues predominate over residues 635–657 (QVSTIDTSPASPSMPQTTLTPAQ). Phosphoserine is present on residues Ser-667 and Ser-671. Pro residues-rich tracts occupy residues 668–683 (PPPSPPPSYHPPPPPT) and 706–716 (PSWPPPPPPAP). The segment covering 779-795 (PQKDSVGKHSGAPREDS) has biased composition (basic and acidic residues). A compositionally biased stretch (polar residues) spans 814–829 (GASTGIPNPSPGSSAP). Ser-838, Ser-842, and Ser-848 each carry phosphoserine. The span at 859-873 (ASSLAASESPASALP) shows a compositional bias: low complexity. Ser-909, Ser-952, and Ser-959 each carry phosphoserine. Over residues 942 to 961 (KAPPPVARKPSVGVPPPSPS) the composition is skewed to pro residues. Polar residues predominate over residues 964-975 (RTESLTAPSTNG).

Able to directly activate the TNF-NFkappaB signaling pathway. This Mus musculus (Mouse) protein is NHS-like protein 3 (Nhsl3).